Consider the following 96-residue polypeptide: Co-chaperonin GroES (96 aa).

The protein belongs to the GroES chaperonin family. Heptamer of 7 subunits arranged in a ring. Interacts with the chaperonin GroEL.

Its subcellular location is the cytoplasm. In terms of biological role, together with the chaperonin GroEL, plays an essential role in assisting protein folding. The GroEL-GroES system forms a nano-cage that allows encapsulation of the non-native substrate proteins and provides a physical environment optimized to promote and accelerate protein folding. GroES binds to the apical surface of the GroEL ring, thereby capping the opening of the GroEL channel. This Myxococcus xanthus (strain DK1622) protein is Co-chaperonin GroES.